The chain runs to 239 residues: 7-cyano-7-deazaguanine synthase (239 aa).

Residue 13–23 (FSGGQDSTTCL) coordinates ATP. Zn(2+) contacts are provided by Cys-192, Cys-201, Cys-204, and Cys-207.

The protein belongs to the QueC family. Requires Zn(2+) as cofactor.

It carries out the reaction 7-carboxy-7-deazaguanine + NH4(+) + ATP = 7-cyano-7-deazaguanine + ADP + phosphate + H2O + H(+). It participates in purine metabolism; 7-cyano-7-deazaguanine biosynthesis. Catalyzes the ATP-dependent conversion of 7-carboxy-7-deazaguanine (CDG) to 7-cyano-7-deazaguanine (preQ(0)). In Shewanella sp. (strain MR-4), this protein is 7-cyano-7-deazaguanine synthase.